Here is a 1393-residue protein sequence, read N- to C-terminus: RNA polymerase II-associated protein 1 (1393 aa).

Disordered stretches follow at residues 34 to 53, 61 to 94, and 266 to 295; these read KKGNRGGGDANSDRPPLQDH, NLPDLPPALVPSPPKRARPSPGHCLPEDEDPEER, and SHTQEQTGETASEEQRPGGPSANVTKEEPL. A compositionally biased stretch (pro residues) spans 64–74; that stretch reads DLPPALVPSPP. Serine 72 is modified (phosphoserine). Threonine 321 is modified (phosphothreonine). The disordered stretch occupies residues 496 to 531; the sequence is PSQEDKEDEDEDEECPAGKAKRKSPEEESRPPPDLA. Positions 500-510 are enriched in acidic residues; sequence DKEDEDEDEEC. The segment covering 518 to 531 has biased composition (basic and acidic residues); it reads KSPEEESRPPPDLA. Position 1121 is a phosphoserine (serine 1121).

Belongs to the RPAP1 family. As to quaternary structure, part of an RNA polymerase II complex that contains POLR2A, POLR2B, POLR2C, POLR2D, POLR2E, POLR2F, POLR2G, POLR2H, POLR2I, POLR2J, POLR2K, POLR2L, RPAP1, FCP1 plus the general transcription factors TFIIB and TFIIF.

The protein resides in the nucleus. Forms an interface between the RNA polymerase II enzyme and chaperone/scaffolding protein, suggesting that it is required to connect RNA polymerase II to regulators of protein complex formation. Required for interaction of the RNA polymerase II complex with acetylated histone H3. The sequence is that of RNA polymerase II-associated protein 1 (RPAP1) from Homo sapiens (Human).